Here is a 509-residue protein sequence, read N- to C-terminus: tRNA-2-methylthio-N(6)-dimethylallyladenosine synthase (509 aa).

A disordered region spans residues 1-21; that stretch reads MNEKQRIESGQVNPSDKKSEK. The 119-residue stretch at 66–184 folds into the MTTase N-terminal domain; it reads RKFYIRTYGC…LPELLSEAYL (119 aa). Residues Cys75, Cys111, Cys145, Cys221, Cys225, and Cys228 each contribute to the [4Fe-4S] cluster site. In terms of domain architecture, Radical SAM core spans 207 to 437; the sequence is RTGKIKGWVN…NEVVNEISAK (231 aa). The region spanning 440 to 503 is the TRAM domain; it reads KEYEGQVVEV…TWSLDGEMVG (64 aa).

It belongs to the methylthiotransferase family. MiaB subfamily. As to quaternary structure, monomer. The cofactor is [4Fe-4S] cluster.

The protein resides in the cytoplasm. It carries out the reaction N(6)-dimethylallyladenosine(37) in tRNA + (sulfur carrier)-SH + AH2 + 2 S-adenosyl-L-methionine = 2-methylsulfanyl-N(6)-dimethylallyladenosine(37) in tRNA + (sulfur carrier)-H + 5'-deoxyadenosine + L-methionine + A + S-adenosyl-L-homocysteine + 2 H(+). Its function is as follows. Catalyzes the methylthiolation of N6-(dimethylallyl)adenosine (i(6)A), leading to the formation of 2-methylthio-N6-(dimethylallyl)adenosine (ms(2)i(6)A) at position 37 in tRNAs that read codons beginning with uridine. The sequence is that of tRNA-2-methylthio-N(6)-dimethylallyladenosine synthase from Bacillus licheniformis (strain ATCC 14580 / DSM 13 / JCM 2505 / CCUG 7422 / NBRC 12200 / NCIMB 9375 / NCTC 10341 / NRRL NRS-1264 / Gibson 46).